We begin with the raw amino-acid sequence, 95 residues long: Small ribosomal subunit protein uS19 (95 aa).

This sequence belongs to the universal ribosomal protein uS19 family.

Its function is as follows. Protein S19 forms a complex with S13 that binds strongly to the 16S ribosomal RNA. The chain is Small ribosomal subunit protein uS19 from Roseiflexus castenholzii (strain DSM 13941 / HLO8).